The primary structure comprises 574 residues: MATRAPLAPPPNETEASVSRITREGKKLTYKLNVMQQPERARACGAGAKSSADRRPVDPPPVVELRVYESDPNDDLNKTDITFAYNANFFLYATLETARPMAQGRFAPNPTCPVLTGVPVAGVAYLDRPSQAGYFIFPDLSVRHEGVYRLNFHLYEETKESKDANENAPIQSMSNPMPAKPMAPKSFLEFRLEVVSVPFTVFSAKKFPGLATSTSLSRVIAEQGCRVRIRRDVRMRRRGEKRTDDYDYDEERVYRSSDRFSTPDTHGYAGTPVERPRSTSTSTVDPSFPYGADAQRRSSGATEHGFQGAQPYQRPMPPAPVPAPVAVSTPAPPAPPAPPSHNPGYQSHLSFGSTQTQYPAPQLPPTPQSASTLAAPYSPHPSYSHARNPSTSAEYETPGYSYPSSRVSTERSSYPKNGLPPLRLEPPKPLNMPSGEPRSSDPNAYHSVAQSAGPRSQTPSSSLVPSLPPLKALSGDYPNNLSQPSSSISQSPSHDLGAGKKFLWDTGASLSKRSYEDSFGHDDRPLYNGMRPDTESHPRRLSDAGRNFYNETRDEMAYKRANGRMATKISPALQ.

Disordered stretches follow at residues 1-22 (MATRAPLAPPPNETEASVSRIT), 39-60 (ERARACGAGAKSSADRRPVDPP), 255-500 (RSSD…GAGK), and 513-548 (RSYEDSFGHDDRPLYNGMRPDTESHPRRLSDAGRNF). A Velvet domain is found at 25-230 (GKKLTYKLNV…AEQGCRVRIR (206 aa)). The Nuclear localization signal signature appears at 39-44 (ERARAC). 2 stretches are compositionally biased toward pro residues: residues 314–323 (RPMPPAPVPA) and 330–341 (PAPPAPPAPPSH). 4 stretches are compositionally biased toward polar residues: residues 343–359 (PGYQSHLSFGSTQTQYP), 385–394 (HARNPSTSAE), 402–415 (YPSSRVSTERSSYP), and 448–458 (VAQSAGPRSQT). The segment at 457–501 (QTPSSSLVPSLPPLKALSGDYPNNLSQPSSSISQSPSHDLGAGKK) is PEST. Low complexity-rich tracts occupy residues 459 to 474 (PSSSLVPSLPPLKALS) and 482 to 493 (SQPSSSISQSPS). 2 stretches are compositionally biased toward basic and acidic residues: residues 513-525 (RSYEDSFGHDDRP) and 532-543 (PDTESHPRRLSD).

Belongs to the velvet family. VeA subfamily. As to quaternary structure, component of the heterotrimeric velvet complex composed of laeA, veA and velB; VeA acting as a bridging protein between laeA and velB.

The protein resides in the nucleus. Its subcellular location is the cytoplasm. Its function is as follows. Component of the velvet transcription factor complex that controls sexual/asexual developmental ratio in response to light, promoting sexual development in the darkness while stimulating asexual sporulation under illumination. The velvet complex hat acts as a global regulator for secondary metabolite gene expression. Controls the expression of the aflatoxin gene cluster. Required for the expression of aflR and aflJ. Mediates the coordination of aflatoxigenic vesicles (aflatoxisomes) development with aflatoxin gene expression. Regulates branched chain amino acid and ethanol metabolism and acts as a positive regulator of mitochondrial and peroxisomal beta-oxidation. The chain is Developmental and secondary metabolism regulator veA from Aspergillus parasiticus.